A 245-amino-acid polypeptide reads, in one-letter code: D-aminoacyl-tRNA deacylase (245 aa).

The protein belongs to the DtdA deacylase family. As to quaternary structure, monomer. Requires Zn(2+) as cofactor.

The catalysed reaction is a D-aminoacyl-tRNA + H2O = a tRNA + a D-alpha-amino acid + H(+). It catalyses the reaction glycyl-tRNA(Ala) + H2O = tRNA(Ala) + glycine + H(+). In terms of biological role, D-aminoacyl-tRNA deacylase with broad substrate specificity. By recycling D-aminoacyl-tRNA to D-amino acids and free tRNA molecules, this enzyme counteracts the toxicity associated with the formation of D-aminoacyl-tRNA entities in vivo. The sequence is that of D-aminoacyl-tRNA deacylase from Ignicoccus hospitalis (strain KIN4/I / DSM 18386 / JCM 14125).